Here is a 323-residue protein sequence, read N- to C-terminus: O-phosphoserine sulfhydrylase (323 aa).

At lysine 51 the chain carries N6-(pyridoxal phosphate)lysine. Residues asparagine 81 and 184–188 each bind pyridoxal 5'-phosphate; that span reads GTTGT. Arginine 220 contributes to the substrate binding site. Pyridoxal 5'-phosphate is bound at residue serine 265.

It belongs to the cysteine synthase/cystathionine beta-synthase family. In terms of assembly, homodimer. Requires pyridoxal 5'-phosphate as cofactor.

The enzyme catalyses [CysO sulfur-carrier protein]-C-terminal-Gly-aminoethanethioate + O-phospho-L-serine + H(+) = [CysO sulfur-carrier protein]-Gly-NH-CH2-C(O)-S-L-Cys + phosphate. It participates in amino-acid biosynthesis; L-cysteine biosynthesis. In terms of biological role, catalyzes the formation of a covalent CysO-cysteine adduct via a sulfur transfer, using the thiocarboxylated sulfur carrier protein CysO-COSH as sulfur donor and O-phospho-L-serine (OPS) as sulfur acceptor. Can also use sodium sulfide as sulfur donor in vitro, albeit with less efficiency. The sequence is that of O-phosphoserine sulfhydrylase (cysM) from Mycobacterium bovis (strain ATCC BAA-935 / AF2122/97).